Here is a 408-residue protein sequence, read N- to C-terminus: LL-diaminopimelate aminotransferase (408 aa).

The substrate site is built by tyrosine 15 and glycine 42. Residues tyrosine 72, 108–109, tyrosine 132, asparagine 187, tyrosine 218, and 246–248 each bind pyridoxal 5'-phosphate; these read SK and SFS. Substrate contacts are provided by lysine 109, tyrosine 132, and asparagine 187. Lysine 249 bears the N6-(pyridoxal phosphate)lysine mark. Pyridoxal 5'-phosphate is bound by residues arginine 257 and asparagine 292. Substrate is bound by residues asparagine 292 and arginine 388.

The protein belongs to the class-I pyridoxal-phosphate-dependent aminotransferase family. LL-diaminopimelate aminotransferase subfamily. In terms of assembly, homodimer. It depends on pyridoxal 5'-phosphate as a cofactor.

The catalysed reaction is (2S,6S)-2,6-diaminopimelate + 2-oxoglutarate = (S)-2,3,4,5-tetrahydrodipicolinate + L-glutamate + H2O + H(+). The protein operates within amino-acid biosynthesis; L-lysine biosynthesis via DAP pathway; LL-2,6-diaminopimelate from (S)-tetrahydrodipicolinate (aminotransferase route): step 1/1. Functionally, involved in the synthesis of meso-diaminopimelate (m-DAP or DL-DAP), required for both lysine and peptidoglycan biosynthesis. Catalyzes the direct conversion of tetrahydrodipicolinate to LL-diaminopimelate. The protein is LL-diaminopimelate aminotransferase of Leptospira borgpetersenii serovar Hardjo-bovis (strain L550).